The chain runs to 151 residues: FAD synthase (151 aa).

ATP is bound by residues 21-22 (TF), 26-29 (HPGH), and Asp104.

This sequence belongs to the archaeal FAD synthase family. As to quaternary structure, homodimer. A divalent metal cation is required as a cofactor.

It catalyses the reaction FMN + ATP + H(+) = FAD + diphosphate. It functions in the pathway cofactor biosynthesis; FAD biosynthesis; FAD from FMN: step 1/1. Catalyzes the transfer of the AMP portion of ATP to flavin mononucleotide (FMN) to produce flavin adenine dinucleotide (FAD) coenzyme. The polypeptide is FAD synthase (Methanosarcina acetivorans (strain ATCC 35395 / DSM 2834 / JCM 12185 / C2A)).